We begin with the raw amino-acid sequence, 68 residues long: Conotoxin Ar5.3 (68 aa).

An N-terminal signal peptide occupies residues 1-19 (MLCLPVFIILLLLASPAAS). The propeptide occupies 20–53 (NPLEKRIQNDLIRAALEDADMENDPRSIIDSVKT).

The protein belongs to the conotoxin T superfamily. Contains 2 disulfide bonds that can be either 'C1-C3, C2-C4' or 'C1-C4, C2-C3', since these disulfide connectivities have been observed for conotoxins with cysteine framework V (for examples, see AC P0DQQ7 and AC P81755). As to expression, expressed by the venom duct.

The protein resides in the secreted. The protein is Conotoxin Ar5.3 of Conus arenatus (Sand-dusted cone).